We begin with the raw amino-acid sequence, 126 residues long: Large ribosomal subunit protein bL17 (126 aa).

Belongs to the bacterial ribosomal protein bL17 family. As to quaternary structure, part of the 50S ribosomal subunit. Contacts protein L32.

The polypeptide is Large ribosomal subunit protein bL17 (Aliivibrio fischeri (strain ATCC 700601 / ES114) (Vibrio fischeri)).